Reading from the N-terminus, the 309-residue chain is Methionyl-tRNA formyltransferase (309 aa).

(6S)-5,6,7,8-tetrahydrofolate is bound at residue 109 to 112 (SLLP).

The protein belongs to the Fmt family.

It catalyses the reaction L-methionyl-tRNA(fMet) + (6R)-10-formyltetrahydrofolate = N-formyl-L-methionyl-tRNA(fMet) + (6S)-5,6,7,8-tetrahydrofolate + H(+). Attaches a formyl group to the free amino group of methionyl-tRNA(fMet). The formyl group appears to play a dual role in the initiator identity of N-formylmethionyl-tRNA by promoting its recognition by IF2 and preventing the misappropriation of this tRNA by the elongation apparatus. This Clostridioides difficile (strain 630) (Peptoclostridium difficile) protein is Methionyl-tRNA formyltransferase.